Here is a 432-residue protein sequence, read N- to C-terminus: MVNTTIKTTKSQEIFAAAQNLMPGGVSSPVRAFKSVGGQPIVFDHVKGAYIWDVDGNQYIDYVGTWGPAICGHAHPDVIGALHDALEKGTSFGAPSFLENVLAEMVIAAVPSIEMVRFVNSGTEACMAVLRLMRAFTNREKVIKFEGCYHGHADMFLVKAGSGVATLGLPDSPGVPKSATSSTLTAPYNDLEAVKALFEENRDQIAGVILEPVVGNAGFITPDAGFLEGLRELTHEHGALLVFDEVMTGFRIAYGGAQEKFGVTPDLTTLGKVIGGGLPVGAYGGRRDIMSMIAPAGPVYQAGTLSGNPLAMTAGIKTLELLQKPGAYEYLERITKKLADGLLQVALETGHAACGGHISAMFGLFFTSGPVHNYEDAKNSDTAKFGRFHRGMLERGVYLAPSQFEAGFTSLAHTDEDIDQTIAIAREVLSSI.

Residue Lys-272 is modified to N6-(pyridoxal phosphate)lysine.

Belongs to the class-III pyridoxal-phosphate-dependent aminotransferase family. HemL subfamily. In terms of assembly, homodimer. It depends on pyridoxal 5'-phosphate as a cofactor.

Its subcellular location is the cytoplasm. The enzyme catalyses (S)-4-amino-5-oxopentanoate = 5-aminolevulinate. The protein operates within porphyrin-containing compound metabolism; protoporphyrin-IX biosynthesis; 5-aminolevulinate from L-glutamyl-tRNA(Glu): step 2/2. It participates in porphyrin-containing compound metabolism; chlorophyll biosynthesis. This Nostoc sp. (strain PCC 7120 / SAG 25.82 / UTEX 2576) protein is Glutamate-1-semialdehyde 2,1-aminomutase.